A 444-amino-acid chain; its full sequence is Aspartate--tRNA(Asp/Asn) ligase (444 aa).

E176 is an L-aspartate binding site. Residues 198–201 (QLFK) are aspartate. R220 is an L-aspartate binding site. Residues 220-222 (RAE), 228-230 (RHL), and E367 each bind ATP. Mg(2+) contacts are provided by E367 and S370. Residues S370 and R374 each coordinate L-aspartate. 415-418 (GCER) is a binding site for ATP.

It belongs to the class-II aminoacyl-tRNA synthetase family. Type 2 subfamily. As to quaternary structure, homodimer. Requires Mg(2+) as cofactor.

It is found in the cytoplasm. The catalysed reaction is tRNA(Asx) + L-aspartate + ATP = L-aspartyl-tRNA(Asx) + AMP + diphosphate. Aspartyl-tRNA synthetase with relaxed tRNA specificity since it is able to aspartylate not only its cognate tRNA(Asp) but also tRNA(Asn). Reaction proceeds in two steps: L-aspartate is first activated by ATP to form Asp-AMP and then transferred to the acceptor end of tRNA(Asp/Asn). This chain is Aspartate--tRNA(Asp/Asn) ligase, found in Methanosarcina barkeri (strain Fusaro / DSM 804).